Reading from the N-terminus, the 228-residue chain is Transcription repressor OFP8 (228 aa).

3 stretches are compositionally biased toward low complexity: residues 1-14 (MSGRSSRRGSFSLR), 54-79 (ASSTSTTTAFTATTGGAGTATSTDSS), and 92-101 (EEPAAAQQEQ). Disordered stretches follow at residues 1–21 (MSGRSSRRGSFSLRQPPVVDI) and 36–143 (SSSS…QLQE). Over residues 107–120 (RRRRRQQRRRRRRA) the composition is skewed to basic residues. An OVATE domain is found at 157–216 (VAVESAEPYEDFRESMVQMVVEKEIYAWDDLNDLLHQFLSLNSPRHHPLILHAFADLWTR).

As to quaternary structure, interacts with GSK2. Post-translationally, phosphorylated on serine and threonine residues by GSK2. Dephosphorylated during response to brassinosteroid. Expressed in roots, stems, stem nodes, young leaves, leaf sheaths, lamina joints, young spikelets, inflorescences, stamens and ovaries, embryos and seeds.

It localises to the nucleus. The protein resides in the cytoplasm. Its function is as follows. Probable transcriptional repressor that regulates multiple aspects of plant growth and development, partly through brassinosteroid (BR) signaling pathway. Acts downstream of the kinase GSK2, a negative regulator of BR signaling. The sequence is that of Transcription repressor OFP8 from Oryza sativa subsp. japonica (Rice).